We begin with the raw amino-acid sequence, 476 residues long: Cytosolic Fe-S cluster assembly factor narfl (476 aa).

[4Fe-4S] cluster-binding residues include Cys-24, Cys-71, Cys-74, Cys-77, Cys-190, Cys-246, Cys-395, and Cys-399.

The protein belongs to the NARF family. In terms of assembly, component of the CIA complex.

Functionally, component of the cytosolic iron-sulfur protein assembly (CIA) complex, a multiprotein complex that mediates the incorporation of iron-sulfur cluster into extramitochondrial Fe/S proteins. This chain is Cytosolic Fe-S cluster assembly factor narfl (narfl), found in Xenopus tropicalis (Western clawed frog).